The sequence spans 181 residues: Malignant T-cell-amplified sequence 1 (181 aa).

At threonine 81 the chain carries Phosphothreonine; by MAPK1 and MAPK3. Positions 92-171 (LPHQQVDKGA…IGIENIHYLN (80 aa)) constitute a PUA domain. Serine 118 is modified (phosphoserine; by CDK1).

The protein belongs to the MCTS1 family. As to quaternary structure, interacts (via PUA domain) with DENR; the complex regulates translation reinitiation. Post-translationally, phosphorylation is critical for stabilization and promotion of cell proliferation. Ubiquitous. Over-expressed in T-cell lymphoid cell lines and in non-Hodgkin lymphoma cell lines as well as in a subset of primary large B-cell lymphomas.

Its subcellular location is the cytoplasm. Translation regulator forming a complex with DENR to promote translation reinitiation. Translation reinitiation is the process where the small ribosomal subunit remains attached to the mRNA following termination of translation of a regulatory upstream ORF (uORF), and resume scanning on the same mRNA molecule to initiate translation of a downstream ORF, usually the main ORF (mORF). The MCTS1/DENR complex is pivotal to two linked mechanisms essential for translation reinitiation. Firstly, the dissociation of deacylated tRNAs from post-termination 40S ribosomal complexes during ribosome recycling. Secondly, the recruitment in an EIF2-independent manner of aminoacylated initiator tRNA to P site of 40S ribosomes for a new round of translation. This regulatory mechanism governs the translation of more than 150 genes which translation reinitiation is MCTS1/DENR complex-dependent. Consequently, modulates various unrelated biological processes including cell cycle regulation and DNA damage signaling and repair. Notably, it positively regulates interferon gamma immunity to mycobacteria by enhancing the translation of JAK2. This chain is Malignant T-cell-amplified sequence 1 (MCTS1), found in Homo sapiens (Human).